Reading from the N-terminus, the 583-residue chain is Alpha-1,3-arabinosyltransferase XAT2 (583 aa).

The Cytoplasmic portion of the chain corresponds to 1 to 21 (MKPVERAKLVRSLRQESRRLR). Residues 22 to 42 (LLVLVIGFFLVTLTFVVISKP) form a helical; Signal-anchor for type II membrane protein membrane-spanning segment. The Lumenal portion of the chain corresponds to 43–583 (DALLFNLNGR…LLEVLDQLNQ (541 aa)). The tract at residues 73–178 (RRSADTFPAA…NGKQEDGKPN (106 aa)) is disordered. 2 stretches are compositionally biased toward basic and acidic residues: residues 102–121 (TSEE…KNEE) and 135–146 (EDNKNGEEEGHT). Polar residues predominate over residues 149–160 (SKVTLPTVSNYT). An N-linked (GlcNAc...) asparagine glycan is attached at Asn158. Basic and acidic residues predominate over residues 162–178 (RDAEDTDNGKQEDGKPN). N-linked (GlcNAc...) asparagine glycans are attached at residues Asn229, Asn382, Asn450, and Asn485.

This sequence belongs to the glycosyltransferase 61 family.

It is found in the golgi apparatus membrane. The protein operates within glycan metabolism. In terms of biological role, glycosyltransferase involved in the arabinosylation of xylan, the major hemicellulose (non-cellulosic component) of primary and secondary walls of angiosperms. Possesses alpha-1,3-arabinosyltransferase activity, transferring an arabinofuranose residue to the xylan backbone. This chain is Alpha-1,3-arabinosyltransferase XAT2, found in Oryza sativa subsp. japonica (Rice).